Here is a 497-residue protein sequence, read N- to C-terminus: Acetyl-coenzyme A carboxylase carboxyl transferase subunit beta, chloroplastic (497 aa).

The 268-residue stretch at 230–497 (LWVQCENCYG…FFPLNQNSIK (268 aa)) folds into the CoA carboxyltransferase N-terminal domain. Zn(2+)-binding residues include cysteine 234, cysteine 237, cysteine 253, and cysteine 256. Residues 234–256 (CENCYGLNYKKFLKSKMNICEQC) form a C4-type zinc finger.

Belongs to the AccD/PCCB family. In terms of assembly, acetyl-CoA carboxylase is a heterohexamer composed of biotin carboxyl carrier protein, biotin carboxylase and 2 subunits each of ACCase subunit alpha and ACCase plastid-coded subunit beta (accD). Zn(2+) serves as cofactor.

It localises to the plastid. The protein localises to the chloroplast stroma. The catalysed reaction is N(6)-carboxybiotinyl-L-lysyl-[protein] + acetyl-CoA = N(6)-biotinyl-L-lysyl-[protein] + malonyl-CoA. The protein operates within lipid metabolism; malonyl-CoA biosynthesis; malonyl-CoA from acetyl-CoA: step 1/1. Component of the acetyl coenzyme A carboxylase (ACC) complex. Biotin carboxylase (BC) catalyzes the carboxylation of biotin on its carrier protein (BCCP) and then the CO(2) group is transferred by the transcarboxylase to acetyl-CoA to form malonyl-CoA. The chain is Acetyl-coenzyme A carboxylase carboxyl transferase subunit beta, chloroplastic from Carica papaya (Papaya).